The primary structure comprises 207 residues: Small ribosomal subunit protein uS4 (207 aa).

In terms of domain architecture, S4 RNA-binding spans 97–165 (SRLDNLVFRM…VKLALESKAV (69 aa)).

Belongs to the universal ribosomal protein uS4 family. Part of the 30S ribosomal subunit. Contacts protein S5. The interaction surface between S4 and S5 is involved in control of translational fidelity.

One of the primary rRNA binding proteins, it binds directly to 16S rRNA where it nucleates assembly of the body of the 30S subunit. In terms of biological role, with S5 and S12 plays an important role in translational accuracy. The chain is Small ribosomal subunit protein uS4 from Mycoplasmoides gallisepticum (strain R(low / passage 15 / clone 2)) (Mycoplasma gallisepticum).